We begin with the raw amino-acid sequence, 152 residues long: Pertussis toxin subunit 4 (152 aa).

The first 42 residues, 1–42, serve as a signal peptide directing secretion; sequence MLRRFPTRTTAPGQGGARRSRVRALAWLLASGAMTHLSPALA. 2 cysteine pairs are disulfide-bonded: cysteine 73-cysteine 93 and cysteine 145-cysteine 151.

Pertussis toxin contains five different chains, S1-S5. They are organized into 2 functional subunits: A, composed of S1 (which is toxic) and B, containing S2, S3, S5, and two copies of S4 (B binds to the membrane receptors). Dimers of S2-S4 and S3-S4 are held together by S5.

Its subcellular location is the secreted. The protein localises to the host cell membrane. In terms of biological role, PTX oligomer B binds to receptors on the eukaryotic cell surface and facilitates the translocation of the toxic subunit across the cell membrane. This chain is Pertussis toxin subunit 4 (ptxD), found in Bordetella parapertussis (strain 12822 / ATCC BAA-587 / NCTC 13253).